An 83-amino-acid chain; its full sequence is Cell division protein ZapB (83 aa).

Residues 7–80 (EMLEKLEAKV…RVRTLLGKMD (74 aa)) adopt a coiled-coil conformation.

It belongs to the ZapB family. In terms of assembly, homodimer. The ends of the coiled-coil dimer bind to each other, forming polymers. Interacts with FtsZ.

The protein resides in the cytoplasm. In terms of biological role, non-essential, abundant cell division factor that is required for proper Z-ring formation. It is recruited early to the divisome by direct interaction with FtsZ, stimulating Z-ring assembly and thereby promoting cell division earlier in the cell cycle. Its recruitment to the Z-ring requires functional FtsA or ZipA. The chain is Cell division protein ZapB from Photobacterium profundum (strain SS9).